A 210-amino-acid chain; its full sequence is LexA repressor (210 aa).

Residues 29–49 (VREIGEAVDLSSTSTVHGHIS) constitute a DNA-binding region (H-T-H motif). Active-site for autocatalytic cleavage activity residues include serine 130 and lysine 168.

It belongs to the peptidase S24 family. In terms of assembly, homodimer.

It carries out the reaction Hydrolysis of Ala-|-Gly bond in repressor LexA.. Represses a number of genes involved in the response to DNA damage (SOS response), including recA and lexA. In the presence of single-stranded DNA, RecA interacts with LexA causing an autocatalytic cleavage which disrupts the DNA-binding part of LexA, leading to derepression of the SOS regulon and eventually DNA repair. The sequence is that of LexA repressor from Lactiplantibacillus plantarum (strain ATCC BAA-793 / NCIMB 8826 / WCFS1) (Lactobacillus plantarum).